A 496-amino-acid chain; its full sequence is Xylulose kinase (496 aa).

Substrate is bound at residue 83–84 (MH). The Proton acceptor role is filled by aspartate 237.

The protein belongs to the FGGY kinase family.

It catalyses the reaction D-xylulose + ATP = D-xylulose 5-phosphate + ADP + H(+). Its function is as follows. Catalyzes the phosphorylation of D-xylulose to D-xylulose 5-phosphate. The chain is Xylulose kinase from Staphylococcus epidermidis (strain ATCC 12228 / FDA PCI 1200).